A 323-amino-acid chain; its full sequence is MSHLPPAIFLMGPTASGKTDLALELARVLPCELISVDSALVYRGMDIGTAKPAKALLAEFPHRLIDIRDPAESYSAAEFRDDALAAMAEISARGRIPLLVGGTMLYYKALLEGLADMPSADPALRAELEARGAAEGWAALHRELATVDPESAARIHPNDPQRLVRALEVYRVSGLSMTAHRLRQVAQNPLSDRSAGEHLPYTVVHLAIAPTQRQILHERIARRFRLMLEQGFVDEVELLWRRGDLHASLPSMRAVGYRQVWEYLDGLLTREQMVERGIIATRQLAKRQFTWLRNWTDLHWLDSLGDDNLQRTLKYLETAAILA.

An ATP-binding site is contributed by 12–19 (GPTASGKT). 14–19 (TASGKT) lines the substrate pocket. 2 interaction with substrate tRNA regions span residues 37–40 (DSAL) and 161–165 (QRLVR).

Belongs to the IPP transferase family. Monomer. Requires Mg(2+) as cofactor.

It carries out the reaction adenosine(37) in tRNA + dimethylallyl diphosphate = N(6)-dimethylallyladenosine(37) in tRNA + diphosphate. In terms of biological role, catalyzes the transfer of a dimethylallyl group onto the adenine at position 37 in tRNAs that read codons beginning with uridine, leading to the formation of N6-(dimethylallyl)adenosine (i(6)A). The chain is tRNA dimethylallyltransferase from Azotobacter vinelandii (strain DJ / ATCC BAA-1303).